The sequence spans 121 residues: uncharacterized protein (121 aa).

The protein to E.coli YcjD and H.influenzae HI_1162.

This is an uncharacterized protein from Haemophilus influenzae (strain ATCC 51907 / DSM 11121 / KW20 / Rd).